A 148-amino-acid chain; its full sequence is Nucleoside diphosphate kinase (148 aa).

ATP is bound by residues K9, F57, R85, T91, R102, and N112. Residue H115 is the Pros-phosphohistidine intermediate of the active site.

Belongs to the NDK family. Homotetramer. Requires Mg(2+) as cofactor.

It is found in the cytoplasm. It catalyses the reaction a 2'-deoxyribonucleoside 5'-diphosphate + ATP = a 2'-deoxyribonucleoside 5'-triphosphate + ADP. The enzyme catalyses a ribonucleoside 5'-diphosphate + ATP = a ribonucleoside 5'-triphosphate + ADP. Major role in the synthesis of nucleoside triphosphates other than ATP. The ATP gamma phosphate is transferred to the NDP beta phosphate via a ping-pong mechanism, using a phosphorylated active-site intermediate. In Macrococcus caseolyticus (strain JCSC5402) (Macrococcoides caseolyticum), this protein is Nucleoside diphosphate kinase.